Reading from the N-terminus, the 156-residue chain is Large ribosomal subunit protein uL22 (156 aa).

The protein belongs to the universal ribosomal protein uL22 family. Part of the 50S ribosomal subunit.

Functionally, this protein binds specifically to 23S rRNA. It makes multiple contacts with different domains of the 23S rRNA in the assembled 50S subunit and ribosome. Its function is as follows. The globular domain of the protein is located near the polypeptide exit tunnel on the outside of the subunit, while an extended beta-hairpin is found that lines the wall of the exit tunnel in the center of the 70S ribosome. This is Large ribosomal subunit protein uL22 from Hyperthermus butylicus (strain DSM 5456 / JCM 9403 / PLM1-5).